Reading from the N-terminus, the 188-residue chain is SAYSvFN domain-containing protein 1 (188 aa).

Basic and acidic residues predominate over residues 1-10; the sequence is MEQRLAEFRE. 2 disordered regions span residues 1 to 43 and 60 to 80; these read MEQR…ATPK and AIAQAQPNQPQEAGQQLPEST. Residues 1-100 are Cytoplasmic-facing; the sequence is MEQRLAEFRE…SFLTNITFLK (100 aa). Low complexity-rich tracts occupy residues 22-43 and 60-75; these read STSSQSVQTSGAKAEPAAATPK and AIAQAQPNQPQEAGQQ. A middle helical (MH) region spans residues 86–100; sequence SSCRQSFLTNITFLK. An intramembrane region (helical) is located at residues 101 to 121; that stretch reads VLLWLVLLGLFVELEFGLAYF. The Cytoplasmic portion of the chain corresponds to 122–188; sequence VLSMFYWMYV…RTSPSCSSYP (67 aa).

Belongs to the SAYSD1 family. Associates (via N-terminus) with ribosomes. As to expression, enriched in testis; predominantly expressed in round and elongating spermatids.

It localises to the endoplasmic reticulum membrane. It is found in the cytoplasmic vesicle membrane. Ufmylation 'reader' component of a translocation-associated quality control pathway, a mechanism that takes place when a ribosome has stalled during translation, and which is required to degrade clogged substrates. Specifically recognizes and binds ufmylated ribosomes when a ribosome has stalled, promoting the transport of stalled nascent chain via the TRAPP complex to lysosomes for degradation. The chain is SAYSvFN domain-containing protein 1 from Mus musculus (Mouse).